A 305-amino-acid polypeptide reads, in one-letter code: Homeobox protein NANOGP8 (305 aa).

Residues 1 to 96 are disordered; it reads MSVDPACPQS…KEDKVPVKKQ (96 aa). Over residues 65–82 the composition is skewed to polar residues; that stretch reads SPDSSTSPKGKQPTSAEN. Positions 95-154 form a DNA-binding region, homeobox; it reads KQKTRTVFSSTQLCVLNDRFQRQKYLSLQQMQELSNILNLSYKQVKTWFQNQRMKSKRWQ. A run of 8 repeats spans residues 196 to 200, 201 to 205, 206 to 210, 216 to 220, 221 to 225, 226 to 230, 231 to 235, and 236 to 240. An 8 X repeats starting with a Trp in each unit region spans residues 196–240; sequence WSNQTWNNSTWSNQTQNIQSWSNHSWNTQTWCTQSWNNQAWNSPF. Residues 196 to 240 are sufficient for transactivation activity; it reads WSNQTWNNSTWSNQTQNIQSWSNHSWNTQTWCTQSWNNQAWNSPF. The interval 241–305 is sufficient for strong transactivation activity; that stretch reads YNCGEESLQS…YSMNMQPEDV (65 aa).

This sequence belongs to the Nanog homeobox family.

It localises to the nucleus. May act as a transcription regulator. When overexpressed, promotes entry of cells into S phase and cell proliferation. This chain is Homeobox protein NANOGP8 (NANOGP8), found in Homo sapiens (Human).